Reading from the N-terminus, the 483-residue chain is UDP-N-acetylmuramoyl-L-alanyl-D-glutamate--2,6-diaminopimelate ligase (483 aa).

S30 is a binding site for UDP-N-acetyl-alpha-D-muramoyl-L-alanyl-D-glutamate. 109–115 contacts ATP; sequence GTNGKTT. Residues 151–152, S178, and R186 contribute to the UDP-N-acetyl-alpha-D-muramoyl-L-alanyl-D-glutamate site; that span reads TT. K218 carries the post-translational modification N6-carboxylysine. Residues R380, 403–406, G453, and E457 each bind meso-2,6-diaminopimelate; that span reads DNPR. The Meso-diaminopimelate recognition motif motif lies at 403–406; that stretch reads DNPR.

The protein belongs to the MurCDEF family. MurE subfamily. Requires Mg(2+) as cofactor. Post-translationally, carboxylation is probably crucial for Mg(2+) binding and, consequently, for the gamma-phosphate positioning of ATP.

It is found in the cytoplasm. It catalyses the reaction UDP-N-acetyl-alpha-D-muramoyl-L-alanyl-D-glutamate + meso-2,6-diaminopimelate + ATP = UDP-N-acetyl-alpha-D-muramoyl-L-alanyl-gamma-D-glutamyl-meso-2,6-diaminopimelate + ADP + phosphate + H(+). It functions in the pathway cell wall biogenesis; peptidoglycan biosynthesis. Its function is as follows. Catalyzes the addition of meso-diaminopimelic acid to the nucleotide precursor UDP-N-acetylmuramoyl-L-alanyl-D-glutamate (UMAG) in the biosynthesis of bacterial cell-wall peptidoglycan. The chain is UDP-N-acetylmuramoyl-L-alanyl-D-glutamate--2,6-diaminopimelate ligase from Chlamydia abortus (strain DSM 27085 / S26/3) (Chlamydophila abortus).